Consider the following 296-residue polypeptide: Small ribosomal subunit biogenesis GTPase RsgA (296 aa).

One can recognise a CP-type G domain in the interval 63–224 (KNQLVRPMVA…IADTPGFSSY (162 aa)). GTP is bound by residues 112–115 (SKTD) and 167–175 (GQTGAGKST). 4 residues coordinate Zn(2+): Cys248, Cys253, His255, and Cys261.

The protein belongs to the TRAFAC class YlqF/YawG GTPase family. RsgA subfamily. Monomer. Associates with 30S ribosomal subunit, binds 16S rRNA. The cofactor is Zn(2+).

It is found in the cytoplasm. In terms of biological role, one of several proteins that assist in the late maturation steps of the functional core of the 30S ribosomal subunit. Helps release RbfA from mature subunits. May play a role in the assembly of ribosomal proteins into the subunit. Circularly permuted GTPase that catalyzes slow GTP hydrolysis, GTPase activity is stimulated by the 30S ribosomal subunit. This chain is Small ribosomal subunit biogenesis GTPase RsgA, found in Limosilactobacillus fermentum (strain NBRC 3956 / LMG 18251) (Lactobacillus fermentum).